The sequence spans 107 residues: Universal stress protein B homolog (107 aa).

Transmembrane regions (helical) follow at residues Ile-6–Leu-26 and Val-86–Leu-106.

It belongs to the universal stress protein B family.

It localises to the cell inner membrane. The protein is Universal stress protein B homolog of Vibrio vulnificus (strain CMCP6).